The following is a 997-amino-acid chain: Pro-apoptotic serine protease NMA111 (997 aa).

Positions 1–43 (MTISLSNIKKRDHSKISDGTSGESSLVKRKQLESATGDQEEEY) are disordered. Residues 83–273 (VVSIHFSQVA…LPLDRILRAL (191 aa)) form a serine protease region. Catalysis depends on charge relay system residues His-121, Asp-152, and Ser-235. 2 PDZ domains span residues 300–378 (RRLG…QRGG) and 779–854 (EEWI…VRDG).

Belongs to the peptidase S1C family. In terms of assembly, interacts with BIR1.

Its subcellular location is the nucleus. Its function is as follows. Nuclear serine protease which mediates apoptosis through proteolysis of the apoptotic inhibitor BIR1. The sequence is that of Pro-apoptotic serine protease NMA111 (NMA111) from Saccharomyces cerevisiae (strain YJM789) (Baker's yeast).